We begin with the raw amino-acid sequence, 216 residues long: ATP-dependent Clp protease proteolytic subunit 1 (216 aa).

The Nucleophile role is filled by serine 119. The active site involves histidine 144.

It belongs to the peptidase S14 family. In terms of assembly, fourteen ClpP subunits assemble into 2 heptameric rings which stack back to back to give a disk-like structure with a central cavity, resembling the structure of eukaryotic proteasomes.

Its subcellular location is the cytoplasm. The catalysed reaction is Hydrolysis of proteins to small peptides in the presence of ATP and magnesium. alpha-casein is the usual test substrate. In the absence of ATP, only oligopeptides shorter than five residues are hydrolyzed (such as succinyl-Leu-Tyr-|-NHMec, and Leu-Tyr-Leu-|-Tyr-Trp, in which cleavage of the -Tyr-|-Leu- and -Tyr-|-Trp bonds also occurs).. Functionally, cleaves peptides in various proteins in a process that requires ATP hydrolysis. Has a chymotrypsin-like activity. Plays a major role in the degradation of misfolded proteins. The sequence is that of ATP-dependent Clp protease proteolytic subunit 1 from Cutibacterium acnes (strain DSM 16379 / KPA171202) (Propionibacterium acnes).